Consider the following 491-residue polypeptide: MEKKTKRQETGWNFDNSYARLPESFFSKLLPAPVRAPKLVVLNDSLATSLGLDAEALKSEEGVAVLAGNKVPEGASPLAQAYAGHQFGHFNMLGDGRALLISEQITPSGQRFDIQLKGSGRTPYSRRGDGRAALGPMLREYIISEAMYALGIPTTRSLAVTTTGESIFRETELPGAILTRVASSHIRVGTFQYAAATRSIEDLKSLADYTIKRHFPHIEAHETPYLALLQEVIERQASLIAKWQLVGFIHGVMNTDNMTISGETIDYGPCAFMDTYNPVTVFSSIDMQGRYAYGNQPYIGVWNLARLAESLLPLLHTDIEQAAQIAQNTISKFGPLYEKHWLAGMRAKLGIFNEEATDKELMEELLNTMEKYRADYTNTFLALTFDTNKDTDFFKSEAFTSWHKKWEERLSRQEESKSSSQQLMRDNNPAIIPRNHRVEEALEAAVKQEDYRVMERLLAALSSPYAHSPEQYEYATVPEPSTQPYRTFCGT.

ATP is bound by residues Gly94, Gly96, Arg97, Lys117, Asp129, Gly130, Arg180, and Arg187. Asp256 serves as the catalytic Proton acceptor. 2 residues coordinate Mg(2+): Asn257 and Asp266. Asp266 is an ATP binding site.

This sequence belongs to the SELO family. The cofactor is Mg(2+). Requires Mn(2+) as cofactor.

It carries out the reaction L-seryl-[protein] + ATP = 3-O-(5'-adenylyl)-L-seryl-[protein] + diphosphate. The catalysed reaction is L-threonyl-[protein] + ATP = 3-O-(5'-adenylyl)-L-threonyl-[protein] + diphosphate. It catalyses the reaction L-tyrosyl-[protein] + ATP = O-(5'-adenylyl)-L-tyrosyl-[protein] + diphosphate. The enzyme catalyses L-histidyl-[protein] + UTP = N(tele)-(5'-uridylyl)-L-histidyl-[protein] + diphosphate. It carries out the reaction L-seryl-[protein] + UTP = O-(5'-uridylyl)-L-seryl-[protein] + diphosphate. The catalysed reaction is L-tyrosyl-[protein] + UTP = O-(5'-uridylyl)-L-tyrosyl-[protein] + diphosphate. In terms of biological role, nucleotidyltransferase involved in the post-translational modification of proteins. It can catalyze the addition of adenosine monophosphate (AMP) or uridine monophosphate (UMP) to a protein, resulting in modifications known as AMPylation and UMPylation. The chain is Protein nucleotidyltransferase YdiU from Bacillus cytotoxicus (strain DSM 22905 / CIP 110041 / 391-98 / NVH 391-98).